A 379-amino-acid chain; its full sequence is Queuine tRNA-ribosyltransferase (379 aa).

Asp94 serves as the catalytic Proton acceptor. Substrate is bound by residues 94–98 (DSGGF), Asp148, Gln191, and Gly218. Residues 249-255 (GVGSPDS) are RNA binding. Asp268 (nucleophile) is an active-site residue. Residues 273-277 (TRIAR) are RNA binding; important for wobble base 34 recognition. Residues Cys306, Cys308, Cys311, and His337 each coordinate Zn(2+).

Belongs to the queuine tRNA-ribosyltransferase family. Homodimer. Within each dimer, one monomer is responsible for RNA recognition and catalysis, while the other monomer binds to the replacement base PreQ1. The cofactor is Zn(2+).

It carries out the reaction 7-aminomethyl-7-carbaguanine + guanosine(34) in tRNA = 7-aminomethyl-7-carbaguanosine(34) in tRNA + guanine. It functions in the pathway tRNA modification; tRNA-queuosine biosynthesis. In terms of biological role, catalyzes the base-exchange of a guanine (G) residue with the queuine precursor 7-aminomethyl-7-deazaguanine (PreQ1) at position 34 (anticodon wobble position) in tRNAs with GU(N) anticodons (tRNA-Asp, -Asn, -His and -Tyr). Catalysis occurs through a double-displacement mechanism. The nucleophile active site attacks the C1' of nucleotide 34 to detach the guanine base from the RNA, forming a covalent enzyme-RNA intermediate. The proton acceptor active site deprotonates the incoming PreQ1, allowing a nucleophilic attack on the C1' of the ribose to form the product. After dissociation, two additional enzymatic reactions on the tRNA convert PreQ1 to queuine (Q), resulting in the hypermodified nucleoside queuosine (7-(((4,5-cis-dihydroxy-2-cyclopenten-1-yl)amino)methyl)-7-deazaguanosine). This chain is Queuine tRNA-ribosyltransferase, found in Bacillus cytotoxicus (strain DSM 22905 / CIP 110041 / 391-98 / NVH 391-98).